Here is a 205-residue protein sequence, read N- to C-terminus: Large ribosomal subunit protein uL3 (205 aa).

The protein belongs to the universal ribosomal protein uL3 family. As to quaternary structure, part of the 50S ribosomal subunit. Forms a cluster with proteins L14 and L19.

Its function is as follows. One of the primary rRNA binding proteins, it binds directly near the 3'-end of the 23S rRNA, where it nucleates assembly of the 50S subunit. The polypeptide is Large ribosomal subunit protein uL3 (Thermosipho africanus (strain TCF52B)).